Here is a 454-residue protein sequence, read N- to C-terminus: Pup--protein ligase (454 aa).

Glu-9 serves as a coordination point for Mg(2+). Arg-53 contacts ATP. Residue Tyr-55 participates in Mg(2+) binding. The Proton acceptor role is filled by Asp-57. Glu-63 is a binding site for Mg(2+). Residues Thr-66 and Trp-420 each contribute to the ATP site.

The protein belongs to the Pup ligase/Pup deamidase family. Pup-conjugating enzyme subfamily.

It catalyses the reaction ATP + [prokaryotic ubiquitin-like protein]-L-glutamate + [protein]-L-lysine = ADP + phosphate + N(6)-([prokaryotic ubiquitin-like protein]-gamma-L-glutamyl)-[protein]-L-lysine.. The protein operates within protein degradation; proteasomal Pup-dependent pathway. Its pathway is protein modification; protein pupylation. Catalyzes the covalent attachment of the prokaryotic ubiquitin-like protein modifier Pup to the proteasomal substrate proteins, thereby targeting them for proteasomal degradation. This tagging system is termed pupylation. The ligation reaction involves the side-chain carboxylate of the C-terminal glutamate of Pup and the side-chain amino group of a substrate lysine. This chain is Pup--protein ligase, found in Paenarthrobacter aurescens (strain TC1).